A 447-amino-acid polypeptide reads, in one-letter code: Argininosuccinate synthase (447 aa).

ATP contacts are provided by residues 12–20 and Ala-39; that span reads AYSGGLDTS. L-citrulline is bound by residues Tyr-92 and Ser-97. Gly-122 is an ATP binding site. L-aspartate is bound by residues Thr-124, Asn-128, and Asp-129. Residue Asn-128 coordinates L-citrulline. Positions 132, 182, 191, 267, and 279 each coordinate L-citrulline.

The protein belongs to the argininosuccinate synthase family. Type 1 subfamily. In terms of assembly, homotetramer.

The protein localises to the cytoplasm. It catalyses the reaction L-citrulline + L-aspartate + ATP = 2-(N(omega)-L-arginino)succinate + AMP + diphosphate + H(+). It functions in the pathway amino-acid biosynthesis; L-arginine biosynthesis; L-arginine from L-ornithine and carbamoyl phosphate: step 2/3. The protein is Argininosuccinate synthase of Sulfurovum sp. (strain NBC37-1).